Consider the following 91-residue polypeptide: Alpha-defensin 31 (91 aa).

An N-terminal signal peptide occupies residues 1 to 19; it reads MKKLVLLFALVLLAFQVQA. The propeptide occupies 20 to 65; the sequence is DSIQNTDEETKTEEQQGEEDQAVSVSFGDPQGSGLQDAALGWGRRC. The tract at residues 22 to 55 is disordered; it reads IQNTDEETKTEEQQGEEDQAVSVSFGDPQGSGLQ. Repeat copies occupy residues 65-67, 68-70, 71-73, 77-79, 80-82, and 83-85. A 6 X 3 AA tandem repeats of C-P-X region spans residues 65–85; that stretch reads CPRCPPCPRCSWCPRCPTCPR.

Belongs to the alpha-defensin family. As to expression, paneth cells of the small bowel.

Its subcellular location is the secreted. Its function is as follows. Apparent precursor of a secreted, cationic, proline- and cysteine-rich peptide that contains Cys-Pro-Xaa repeats. Unlike cryptdin, the proposed mature peptide region lacks the structural motif characteristic of defensins. It may have microbicidal activities. This is Alpha-defensin 31 from Mus musculus (Mouse).